Reading from the N-terminus, the 109-residue chain is Ycf20-like protein (109 aa).

It belongs to the ycf20 family.

This Synechocystis sp. (strain ATCC 27184 / PCC 6803 / Kazusa) protein is Ycf20-like protein.